A 59-amino-acid polypeptide reads, in one-letter code: Putative potassium channel toxin Ts24 (59 aa).

Residues 1–22 form the signal peptide; that stretch reads MKAFYGILIIFILISMIHLSQQ. 3 cysteine pairs are disulfide-bonded: cysteine 29/cysteine 50, cysteine 35/cysteine 55, and cysteine 39/cysteine 57.

This sequence belongs to the short scorpion toxin superfamily. Potassium channel inhibitor family. Alpha-KTx 04 subfamily. Expressed by the venom gland.

The protein resides in the secreted. Functionally, potently blocks Kv1.1/KCNA1 (85%), Kv1.2/KCNA2 (91%), Kv1.3/KCNA3 (89%), Kv1.6/KCNA6 (94%), and Shaker (97%). The polypeptide is Putative potassium channel toxin Ts24 (Tityus serrulatus (Brazilian scorpion)).